Reading from the N-terminus, the 191-residue chain is Flagellar transcriptional regulator FlhC (191 aa).

Zn(2+) contacts are provided by cysteine 139, cysteine 142, cysteine 159, and cysteine 162.

The protein belongs to the FlhC family. As to quaternary structure, heterohexamer composed of two FlhC and four FlhD subunits. Each FlhC binds a FlhD dimer, forming a heterotrimer, and a hexamer assembles by dimerization of two heterotrimers. Zn(2+) serves as cofactor.

It localises to the cytoplasm. Functions in complex with FlhD as a master transcriptional regulator that regulates transcription of several flagellar and non-flagellar operons by binding to their promoter region. Activates expression of class 2 flagellar genes, including fliA, which is a flagellum-specific sigma factor that turns on the class 3 genes. Also regulates genes whose products function in a variety of physiological pathways. The chain is Flagellar transcriptional regulator FlhC from Enterobacter cloacae subsp. cloacae (strain ATCC 13047 / DSM 30054 / NBRC 13535 / NCTC 10005 / WDCM 00083 / NCDC 279-56).